The primary structure comprises 304 residues: Voltage-dependent anion channel-forming protein YneE (304 aa).

Transmembrane regions (helical) follow at residues 28 to 48, 50 to 70, 194 to 214, and 220 to 240; these read LLLNFLFSIAVIFMLPWYTHL, IKFTLAPFSILGVAIAIFLGF, VLAGCERIAYTPIPFAYTLIL, and LFCIMLPFALVVDLHYMTPFI.

It belongs to the anion channel-forming bestrophin (TC 1.A.46) family.

It localises to the cell membrane. The protein is Voltage-dependent anion channel-forming protein YneE (yneE) of Escherichia coli O157:H7.